The primary structure comprises 626 residues: Polypeptide N-acetylgalactosaminyltransferase 5 (626 aa).

Over 1–11 (MIIFKKKAILK) the chain is Cytoplasmic. The chain crosses the membrane as a helical; Signal-anchor for type II membrane protein span at residues 12–31 (VLLLVPVFWICSLIFFAATS). The N-linked (GlcNAc...) asparagine glycan is linked to Asn-32. The Lumenal portion of the chain corresponds to 32-626 (NDSSQIGSNN…AIEHGAKPPS (595 aa)). 5 cysteine pairs are disulfide-bonded: Cys-165–Cys-399, Cys-390–Cys-466, Cys-502–Cys-521, Cys-544–Cys-557, and Cys-583–Cys-598. A catalytic subdomain A region spans residues 174 to 284 (LPRTSVIICF…EGWMEPLLDR (111 aa)). Positions 215 and 245 each coordinate substrate. Asp-268 contacts Mn(2+). Ser-269 contacts substrate. Mn(2+) is bound at residue His-270. A glycan (N-linked (GlcNAc...) asparagine) is linked at Asn-338. Residues 345-407 (PVRSPTMAGG…PCSHVGHVFR (63 aa)) are catalytic subdomain B. Residue Trp-376 participates in substrate binding. His-404 lines the Mn(2+) pocket. Arg-407 and Tyr-412 together coordinate substrate. In terms of domain architecture, Ricin B-type lectin spans 488-610 (AKGEVRNSAV…DDPYQHWKFK (123 aa)).

This sequence belongs to the glycosyltransferase 2 family. GalNAc-T subfamily. It depends on Mn(2+) as a cofactor.

It is found in the golgi apparatus membrane. It catalyses the reaction L-seryl-[protein] + UDP-N-acetyl-alpha-D-galactosamine = a 3-O-[N-acetyl-alpha-D-galactosaminyl]-L-seryl-[protein] + UDP + H(+). It carries out the reaction L-threonyl-[protein] + UDP-N-acetyl-alpha-D-galactosamine = a 3-O-[N-acetyl-alpha-D-galactosaminyl]-L-threonyl-[protein] + UDP + H(+). It functions in the pathway protein modification; protein glycosylation. In terms of biological role, catalyzes the initial reaction in O-linked oligosaccharide biosynthesis, the transfer of an N-acetyl-D-galactosamine residue to a serine or threonine residue on the protein receptor. The sequence is that of Polypeptide N-acetylgalactosaminyltransferase 5 (gly-5) from Caenorhabditis elegans.